Here is a 567-residue protein sequence, read N- to C-terminus: Putative laccase-17 (567 aa).

The signal sequence occupies residues 1-22; sequence MPSRGCSCWLLSLALLCSLAAA. 2 Plastocyanin-like domains span residues 30–146 and 158–310; these read VIRE…PRDG and ELAP…YGAA. A glycan (N-linked (GlcNAc...) asparagine) is linked at Asn-76. His-80, His-82, His-125, and His-127 together coordinate Cu cation. 10 N-linked (GlcNAc...) asparagine glycosylation sites follow: Asn-187, Asn-241, Asn-298, Asn-312, Asn-327, Asn-365, Asn-368, Asn-378, Asn-388, and Asn-430. One can recognise a Plastocyanin-like 3 domain in the interval 415 to 551; the sequence is DFPANPPVQF…AMAFLVDDGV (137 aa). Cu cation is bound by residues His-468, His-471, His-473, His-530, Cys-531, His-532, and His-536.

Belongs to the multicopper oxidase family. The cofactor is Cu cation.

The protein localises to the secreted. It localises to the extracellular space. It is found in the apoplast. It carries out the reaction 4 hydroquinone + O2 = 4 benzosemiquinone + 2 H2O. Its function is as follows. Lignin degradation and detoxification of lignin-derived products. The chain is Putative laccase-17 (LAC17) from Oryza sativa subsp. japonica (Rice).